A 112-amino-acid polypeptide reads, in one-letter code: Na(+)/H(+) antiporter subunit C (112 aa).

The next 3 helical transmembrane spans lie at 4-21, 28-50, and 70-92; these read LMSI…YLIL, VVVG…AGLQ, and QALI…VLAY.

The protein belongs to the CPA3 antiporters (TC 2.A.63) subunit C family. As to quaternary structure, forms a heterooligomeric complex that consists of seven subunits: MrpA, MrpB, MrpC, MrpD, MrpE, MrpF and MrpG.

It is found in the cell membrane. Functionally, mnh complex is a Na(+)Li(+)/H(+) antiporter involved in Na(+) and/or Li(+) excretion and Na(+) resistance. Na(+)/H(+) antiport consumes a transmembrane electrical potential, and is thus inferred to be electrogenic. Does not transport K(+), Ca(2+) or Mg(2+). The sequence is that of Na(+)/H(+) antiporter subunit C (mrpC) from Alkalihalophilus pseudofirmus (strain ATCC BAA-2126 / JCM 17055 / OF4) (Bacillus pseudofirmus).